A 479-amino-acid chain; its full sequence is Aspartyl/glutamyl-tRNA(Asn/Gln) amidotransferase subunit B (479 aa).

The protein belongs to the GatB/GatE family. GatB subfamily. In terms of assembly, heterotrimer of A, B and C subunits.

The enzyme catalyses L-glutamyl-tRNA(Gln) + L-glutamine + ATP + H2O = L-glutaminyl-tRNA(Gln) + L-glutamate + ADP + phosphate + H(+). It carries out the reaction L-aspartyl-tRNA(Asn) + L-glutamine + ATP + H2O = L-asparaginyl-tRNA(Asn) + L-glutamate + ADP + phosphate + 2 H(+). Allows the formation of correctly charged Asn-tRNA(Asn) or Gln-tRNA(Gln) through the transamidation of misacylated Asp-tRNA(Asn) or Glu-tRNA(Gln) in organisms which lack either or both of asparaginyl-tRNA or glutaminyl-tRNA synthetases. The reaction takes place in the presence of glutamine and ATP through an activated phospho-Asp-tRNA(Asn) or phospho-Glu-tRNA(Gln). The chain is Aspartyl/glutamyl-tRNA(Asn/Gln) amidotransferase subunit B from Streptococcus mutans serotype c (strain ATCC 700610 / UA159).